The sequence spans 530 residues: Glucose-6-phosphate isomerase (530 aa).

Catalysis depends on Glu-347, which acts as the Proton donor. Catalysis depends on residues His-378 and Lys-493.

The protein belongs to the GPI family.

It is found in the cytoplasm. The catalysed reaction is alpha-D-glucose 6-phosphate = beta-D-fructose 6-phosphate. The protein operates within carbohydrate biosynthesis; gluconeogenesis. Its pathway is carbohydrate degradation; glycolysis; D-glyceraldehyde 3-phosphate and glycerone phosphate from D-glucose: step 2/4. Functionally, catalyzes the reversible isomerization of glucose-6-phosphate to fructose-6-phosphate. The sequence is that of Glucose-6-phosphate isomerase from Chlamydia abortus (strain DSM 27085 / S26/3) (Chlamydophila abortus).